A 147-amino-acid polypeptide reads, in one-letter code: MRLAIMLSATAVAINFATCSAIDQTKVLVYGTPAHYIHDSAGRRLLRKNEENEETSEERAPNFNLANLNEEMFNVAALTKRADAKKLAKQLMGNDKLADAAYIWWQHNRVTLDQIDTFLKLASRKTQGAKYNQIYNSYMMHLGLTGY.

The first 21 residues, 1–21, serve as a signal peptide directing secretion; that stretch reads MRLAIMLSATAVAINFATCSA. The RxLR-dEER motif lies at 44-59; sequence RLLRKNEENEETSEER. Lys-48 carries the N6-acetyllysine modification. Residues 77-147 form an effector domain region; sequence ALTKRADAKK…YMMHLGLTGY (71 aa).

Belongs to the RxLR effector family. As to quaternary structure, forms homodimers via the RxLR-dEER motif. Interacts with host E3 ligase CMPG1. Interacts with host DRP2. Proteolytically cleaved. The cleavage site directly after the RxLR sequence and the high conservation among other effector proteins suggest that the RxLR motif might play a crucial role in the intracellular processing before secretion. In terms of processing, glycosylated. Post-translationally, N-acetylated at Lys-48 after cleavage.

The protein localises to the secreted. Its subcellular location is the host cytoplasm. It is found in the host endosome. Its function is as follows. Multifunctional effector that can suppress host BAK1/SERK3-mediated immunity through at least two different pathways. Manipulates plant immunity by targeting and stabilizing host E3 ligase CMPG1. Preventing the normal 26S proteasome-dependent degradation of potato CMPG1, and thus potentially of its protein substrates in the host cell, further abolishes host cell death during the biotrophic phase of infection. Also associates with the dynamin-related protein 2 (DRP2), a plant GTPase involved in immune receptor-mediated endocytosis. The Avr3A(KI) form is recognized by R3a which triggers R3a-mediated hypersensitivity and suppresses INF1-induced cell death. The sequence is that of RxLR effector protein Avr3a from Phytophthora infestans (Potato late blight agent).